A 441-amino-acid polypeptide reads, in one-letter code: ATP-dependent protease ATPase subunit HslU (441 aa).

ATP contacts are provided by residues I18 and G60 to E65. The interval I131–R158 is disordered. Basic and acidic residues predominate over residues R140–S152. The ATP site is built by D254, E320, and R392.

This sequence belongs to the ClpX chaperone family. HslU subfamily. A double ring-shaped homohexamer of HslV is capped on each side by a ring-shaped HslU homohexamer. The assembly of the HslU/HslV complex is dependent on binding of ATP.

The protein localises to the cytoplasm. Its function is as follows. ATPase subunit of a proteasome-like degradation complex; this subunit has chaperone activity. The binding of ATP and its subsequent hydrolysis by HslU are essential for unfolding of protein substrates subsequently hydrolyzed by HslV. HslU recognizes the N-terminal part of its protein substrates and unfolds these before they are guided to HslV for hydrolysis. The protein is ATP-dependent protease ATPase subunit HslU of Chromohalobacter salexigens (strain ATCC BAA-138 / DSM 3043 / CIP 106854 / NCIMB 13768 / 1H11).